We begin with the raw amino-acid sequence, 235 residues long: Intron-encoded endonuclease I-SceI (235 aa).

The protein belongs to the LAGLIDADG endonuclease family. In terms of assembly, monomer. The cofactor is Mg(2+).

The protein resides in the mitochondrion. Mitochondrial DNA endonuclease involved in intron homing. It introduces a specific double-strand break in the DNA of the 21S rRNA gene and thus mediates the insertion of an intron, containing its own coding sequence (group I intron), into an intronless gene. Specifically recognizes and cleaves the sequence 5'-TAGGGATAACAGGGTAAT-3'. This is Intron-encoded endonuclease I-SceI (SCEI) from Saccharomyces cerevisiae (strain ATCC 204508 / S288c) (Baker's yeast).